The sequence spans 375 residues: Lipid-A-disaccharide synthase (375 aa).

The protein belongs to the LpxB family.

It catalyses the reaction a lipid X + a UDP-2-N,3-O-bis[(3R)-3-hydroxyacyl]-alpha-D-glucosamine = a lipid A disaccharide + UDP + H(+). It participates in bacterial outer membrane biogenesis; LPS lipid A biosynthesis. Condensation of UDP-2,3-diacylglucosamine and 2,3-diacylglucosamine-1-phosphate to form lipid A disaccharide, a precursor of lipid A, a phosphorylated glycolipid that anchors the lipopolysaccharide to the outer membrane of the cell. This is Lipid-A-disaccharide synthase from Pseudomonas putida (strain W619).